Here is a 199-residue protein sequence, read N- to C-terminus: Transcription regulator complex subunit bur6 (199 aa).

The segment at 106-199 (PPIKAERKTK…SEASSASGDE (94 aa)) is disordered. Positions 112-121 (RKTKRPRARR) are enriched in basic residues. The segment covering 185–199 (SDKTTSEASSASGDE) has biased composition (polar residues).

It belongs to the NC2 alpha/DRAP1 family.

It localises to the nucleus. Functionally, transcription regulator complex subunit that is essential for cell cycle progression. This Schizosaccharomyces pombe (strain 972 / ATCC 24843) (Fission yeast) protein is Transcription regulator complex subunit bur6.